The following is a 474-amino-acid chain: Vitamin D-binding protein (474 aa).

The signal sequence occupies residues 1–16; it reads MKRVLVLLLAVAFGHA. Albumin domains follow at residues 17-208, 209-394, and 395-474; these read LERG…QLKH, LSLL…LLKK, and ELSS…KNIL. 14 cysteine pairs are disulfide-bonded: cysteine 29-cysteine 75, cysteine 74-cysteine 83, cysteine 96-cysteine 112, cysteine 111-cysteine 122, cysteine 145-cysteine 190, cysteine 189-cysteine 198, cysteine 220-cysteine 266, cysteine 265-cysteine 273, cysteine 286-cysteine 300, cysteine 299-cysteine 311, cysteine 335-cysteine 376, cysteine 375-cysteine 384, cysteine 407-cysteine 453, and cysteine 452-cysteine 462.

The protein belongs to the ALB/AFP/VDB family. Associates with membrane-bound immunoglobulin on the surface of B-lymphocytes and with IgG Fc receptor on the membranes of T-lymphocytes. Interacts with LRP2; the interaction is required for renal uptake of GC in complex with 25-hydroxyvitamin D3. Post-translationally, allele GC*1S is O-glycosylated at Thr-436. The trisaccharide sugar moiety can be modified by the successive removal of neuraminic acid and galactose leaving an O-mceeN-acetyl-galactosamine. This conversion is thought to produce a macrophage-activating factor (Gc-MAF). Only a minor proportion of plasma GC is O-glycosylated. The potential N-glycosylation site predicted at Asn-288 is thought to be nonglycosylated. Expressed in the liver. Found in plasma, ascites, cerebrospinal fluid and urine.

Its subcellular location is the secreted. Involved in vitamin D transport and storage, scavenging of extracellular G-actin, enhancement of the chemotactic activity of C5 alpha for neutrophils in inflammation and macrophage activation. This chain is Vitamin D-binding protein (GC), found in Homo sapiens (Human).